The primary structure comprises 459 residues: Putrescine aminotransferase (459 aa).

Pyridoxal 5'-phosphate-binding positions include 150–151 and Gln274; that span reads GT. An N6-(pyridoxal phosphate)lysine modification is found at Lys300. Thr332 lines the pyridoxal 5'-phosphate pocket.

It belongs to the class-III pyridoxal-phosphate-dependent aminotransferase family. Putrescine aminotransferase subfamily. Requires pyridoxal 5'-phosphate as cofactor.

It carries out the reaction an alkane-alpha,omega-diamine + 2-oxoglutarate = an omega-aminoaldehyde + L-glutamate. It catalyses the reaction putrescine + 2-oxoglutarate = 1-pyrroline + L-glutamate + H2O. The catalysed reaction is cadaverine + 2-oxoglutarate = 5-aminopentanal + L-glutamate. It participates in amine and polyamine degradation; putrescine degradation; 4-aminobutanal from putrescine (transaminase route): step 1/1. In terms of biological role, catalyzes the aminotransferase reaction from putrescine to 2-oxoglutarate, leading to glutamate and 4-aminobutanal, which spontaneously cyclizes to form 1-pyrroline. This is the first step in one of two pathways for putrescine degradation, where putrescine is converted into 4-aminobutanoate (gamma-aminobutyrate or GABA) via 4-aminobutanal. Also functions as a cadaverine transaminase in a a L-lysine degradation pathway to succinate that proceeds via cadaverine, glutarate and L-2-hydroxyglutarate. The polypeptide is Putrescine aminotransferase (Escherichia coli O7:K1 (strain IAI39 / ExPEC)).